The sequence spans 200 residues: Glycerol-3-phosphate acyltransferase (200 aa).

The next 5 helical transmembrane spans lie at Met-1–Val-21, Val-51–Ala-71, Val-84–Phe-104, Ile-116–Ala-136, and Phe-159–Leu-179.

It belongs to the PlsY family. Probably interacts with PlsX.

It localises to the cell inner membrane. The catalysed reaction is an acyl phosphate + sn-glycerol 3-phosphate = a 1-acyl-sn-glycero-3-phosphate + phosphate. Its pathway is lipid metabolism; phospholipid metabolism. Catalyzes the transfer of an acyl group from acyl-phosphate (acyl-PO(4)) to glycerol-3-phosphate (G3P) to form lysophosphatidic acid (LPA). This enzyme utilizes acyl-phosphate as fatty acyl donor, but not acyl-CoA or acyl-ACP. The polypeptide is Glycerol-3-phosphate acyltransferase (Nitrosomonas eutropha (strain DSM 101675 / C91 / Nm57)).